Here is a 523-residue protein sequence, read N- to C-terminus: MPTVEELYRNYGILADAKDDVGQHKSAYQVILDGVKGGPKEKRLAAQFIPKFFKHFPDLSDAALNAQLDLCEDEDVSIRRQAIKELSQFATGENLPRVADILTQLLQSDDSAEFNLVNNALLSIFKMDAKGTLGGLFSQILQGEDVVRERAIKFLATKMKTLPEDILTKEVDDYIFSESKKVLYDVTGEEFVLFMKILSALKNLQTVSGRQQLVDLVSEQAGLHQTLNPADPDSVDRLLQCMRQAVPLFSKNVHSTKFVTYFCEQVLPILSSLTSPAEGIDVQLEVLKLLAEMSSFCGDMDKLESNLNKLFDKLLEFMPLPPEEVENGDSAANEEPKLQFSYVECLLFSFHQLGRKLPDFLIAKVDAEKLKDFKIRLQYFARGLQVYIRQLRLTLQGKSGDALKTEENKIKVVALKITNNINVLIKDLFHNPPSYKSTVTLSWKPVQKTDSGQKRMSDETSSTSPPKKPVVGPKRDSRQIYNPPSGKYSGNVGAFSYEQRGGFQGGRGRGWGGRGNRSRGRIY.

Residues 1–360 (MPTVEELYRN…HQLGRKLPDF (360 aa)) are ARM-like and Heat-like helical repeats. The disordered stretch occupies residues 446-523 (VQKTDSGQKR…RGNRSRGRIY (78 aa)). Residues 454–475 (KRMSDETSSTSPPKKPVVGPKR) carry the Nuclear localization signal motif. Residues 502 to 515 (GFQGGRGRGWGGRG) are compositionally biased toward gly residues.

This sequence belongs to the API5 family. As to quaternary structure, monomer.

The protein resides in the nucleus. In terms of biological role, may be an antiapoptotic factor. The sequence is that of Apoptosis inhibitor 5-B (api5-b) from Xenopus laevis (African clawed frog).